The following is a 275-amino-acid chain: Homeobox-leucine zipper protein ATHB-17 (275 aa).

A disordered region spans residues 95-143; sequence SSPLSDEGSGGGRDQLRLDMNRLPSSEDGDDEEFSHDDGSAPPRKKLRL. The homeobox DNA-binding region spans 136 to 195; it reads PPRKKLRLTREQSRLLEDSFRQNHTLNPKQKEVLAKHLMLRPRQIEVWFQNRRARSKLKQ. The leucine-zipper stretch occupies residues 203–224; it reads LKRWFGSLTEENHRLHREVEEL. The interval 252-275 is disordered; sequence AASPSRAVVPVPAKKTFPPQERDR.

The protein belongs to the HD-ZIP homeobox family. Class II subfamily.

Its subcellular location is the nucleus. Probable transcription factor. This is Homeobox-leucine zipper protein ATHB-17 (ATHB-17) from Arabidopsis thaliana (Mouse-ear cress).